A 1126-amino-acid chain; its full sequence is Translation initiation factor IF-2 (1126 aa).

Residues 63-519 are disordered; sequence LSINKPSIKK…TTRQRQKRRA (457 aa). Residues 70–83 show a composition bias toward basic and acidic residues; that stretch reads IKKDNFKQNKEDKS. Over residues 93-111 the composition is skewed to low complexity; it reads PLKNNSNKKPLLIKPLNKP. A compositionally biased stretch (polar residues) spans 116 to 151; that stretch reads KISNQLQNPNKPNIVNSSQSRANLTNTNSKPSQNFN. The span at 161 to 171 shows a compositional bias: pro residues; that stretch reads TPPPIKSPAKP. Residues 181-195 show a composition bias toward polar residues; the sequence is NINNNVKSSESSQNI. Composition is skewed to low complexity over residues 211–224 and 240–252; these read NTNKPKTKNFNNRK and IINPNKQNNNKQN. Residues 254–264 are compositionally biased toward polar residues; it reads AFKQTASNRPG. 2 stretches are compositionally biased toward low complexity: residues 291-315 and 327-349; these read NRQGNPNRPGSPNRPGMPNRPGLRN and NRQGNPNRPGSPNGPGMPNNRPG. Positions 429–443 are enriched in basic and acidic residues; sequence GKTDWDDSAKLEALR. Residues 501 to 517 show a composition bias toward basic residues; the sequence is KQFKKKKKETTRQRQKR. The tr-type G domain occupies 618-790; that stretch reads RRPPVITVMG…ILLVSDVEDL (173 aa). Residues 627–634 are G1; it reads GHVDHGKT. 627–634 lines the GTP pocket; sequence GHVDHGKT. The G2 stretch occupies residues 652–656; that stretch reads GITQH. The interval 677–680 is G3; it reads DTPG. GTP-binding positions include 677–681 and 731–734; these read DTPGH and NKID. The interval 731 to 734 is G4; that stretch reads NKID. The interval 767 to 769 is G5; it reads SAI.

Belongs to the TRAFAC class translation factor GTPase superfamily. Classic translation factor GTPase family. IF-2 subfamily.

It localises to the cytoplasm. Its function is as follows. One of the essential components for the initiation of protein synthesis. Protects formylmethionyl-tRNA from spontaneous hydrolysis and promotes its binding to the 30S ribosomal subunits. Also involved in the hydrolysis of GTP during the formation of the 70S ribosomal complex. This Prochlorococcus marinus (strain AS9601) protein is Translation initiation factor IF-2.